Consider the following 264-residue polypeptide: Small ribosomal subunit protein mS23 (264 aa).

Positions 233-264 are disordered; that stretch reads ARTSNPAGSWKDDTTLNTAQEEESTTSENLHF.

Belongs to the mitochondrion-specific ribosomal protein mS23 family. Component of the mitochondrial small ribosomal subunit. Mature mitochondrial ribosomes consist of a small (37S) and a large (54S) subunit. The 37S subunit contains at least 33 different proteins and 1 molecule of RNA (15S). The 54S subunit contains at least 45 different proteins and 1 molecule of RNA (21S).

Its subcellular location is the mitochondrion. This is Small ribosomal subunit protein mS23 (RSM25) from Saccharomyces cerevisiae (strain YJM789) (Baker's yeast).